A 307-amino-acid chain; its full sequence is MINKDIYQALQQLIPNEKIKVDEPLKRYTYTKTGGNADFYITPTKNEEVQAVVKYAYQNEIPVTYLGNGSNIIIREGGIRGIVISLLSLDHIDVSDDAIIAGSGAAIIDVSRVARDYALTGLEFACGIPGSIGGAVYMNAGAYGGEVKDCIDYALCVNEQGSLIKLTTKELELDYRNSIIQKEHLVVLEAAFTLAPGKMTEIQAKMDDLTERRESKQPLEYPSCGSVFQRPPGHFAGKLIQDSNLQGHRIGGVEVSTKHAGFMVNVDNGTATDYENLIHYVQKTVKEKFGIELNREVRIIGEHPKES.

The region spanning 33–197 (TGGNADFYIT…LEAAFTLAPG (165 aa)) is the FAD-binding PCMH-type domain. R176 is a catalytic residue. S226 serves as the catalytic Proton donor. Residue E296 is part of the active site.

The protein belongs to the MurB family. FAD serves as cofactor.

It is found in the cytoplasm. It carries out the reaction UDP-N-acetyl-alpha-D-muramate + NADP(+) = UDP-N-acetyl-3-O-(1-carboxyvinyl)-alpha-D-glucosamine + NADPH + H(+). Its pathway is cell wall biogenesis; peptidoglycan biosynthesis. In terms of biological role, cell wall formation. In Staphylococcus aureus (strain Mu3 / ATCC 700698), this protein is UDP-N-acetylenolpyruvoylglucosamine reductase.